We begin with the raw amino-acid sequence, 341 residues long: MASEAPPFWWDEPDWRALALAPAAWIYGRVSGRRLIRAVPPRVSLPVLCVGNFTVGGAGKTPTAIAFARGAIARGMKPGIVSRGYGGNYSGLHLVDPGHDGARHVGDEPLLLARHAAVALSPDRVKAAEYLKSLGCDFIIMDDGFQSARLHADFSLLVVDASRGIGNGRVIPAGPLRAPLTDQMRKTDALLCIGKGNGADFVIRQAARAGRPIYHAQLRPSSSATVAGRRWLAFAGIGNPDKFYESVRQAGGEVVETHSFADHYSFEPDDIRGLVDMARRQGLGLITTAKDHVRLATMPDVPPEFLSKLAVLDVDLEFDRTDALDHILDTVVERFKSRLHG.

Residue 54–61 participates in ATP binding; the sequence is TVGGAGKT.

Belongs to the LpxK family.

The enzyme catalyses a lipid A disaccharide + ATP = a lipid IVA + ADP + H(+). The protein operates within glycolipid biosynthesis; lipid IV(A) biosynthesis; lipid IV(A) from (3R)-3-hydroxytetradecanoyl-[acyl-carrier-protein] and UDP-N-acetyl-alpha-D-glucosamine: step 6/6. Functionally, transfers the gamma-phosphate of ATP to the 4'-position of a tetraacyldisaccharide 1-phosphate intermediate (termed DS-1-P) to form tetraacyldisaccharide 1,4'-bis-phosphate (lipid IVA). The sequence is that of Tetraacyldisaccharide 4'-kinase from Brucella ovis (strain ATCC 25840 / 63/290 / NCTC 10512).